The primary structure comprises 473 residues: Phosphatidylserine synthase 1 (473 aa).

N-acetylalanine is present on alanine 2. Residues 2 to 35 (ASCVGSRTLSKDDVNYRMHFRMINEQQVEDITID) lie on the Cytoplasmic side of the membrane. The chain crosses the membrane as a helical span at residues 36–56 (FFYRPHTITLLSFTIISLMYF). Topologically, residues 57–72 (AFTRDDCVPEDNIWRG) are lumenal. A helical transmembrane segment spans residues 73–93 (ILSVIFFFLIISVLAFPNGPF). At 94–102 (TRPHPALWR) the chain is on the cytoplasmic side. A helical membrane pass occupies residues 103–123 (MVFGLSVLYFLFLVFLLFLNF). The Lumenal segment spans residues 124 to 186 (EQVKSLMYWL…AMKALLIRSY (63 aa)). Residues 187 to 207 (GLCWTISITWELTELFFMHLL) traverse the membrane as a helical segment. The Cytoplasmic portion of the chain corresponds to 208–216 (PNFAECWWD). The helical transmembrane segment at 217–237 (QVILDILLCNGGGIWLGMVVC) threads the bilayer. The Lumenal portion of the chain corresponds to 238-286 (RFLEMRTYHWASFKDIHTTTGKIKRAVLQFTPASWTYVRWFDPKSSFQR). The helical transmembrane segment at 287 to 307 (VAGIYLFMIIWQLTELNTFFL) threads the bilayer. The Cytoplasmic portion of the chain corresponds to 308–319 (KHIFVFQASHPL). The helical transmembrane segment at 320–342 (SWCRILFIGCITAPTVRQYYAYL) threads the bilayer. Residues 343–355 (TDTQCKRVGTQCW) lie on the Lumenal side of the membrane. A helical membrane pass occupies residues 356–376 (VFGVIGFLEAIVCIKFGQDLF). Residues 377–383 (SKTQILY) lie on the Cytoplasmic side of the membrane. The helical transmembrane segment at 384-404 (VVLWLLCVAFTTFLCLYGMVW) threads the bilayer. Topologically, residues 405 to 473 (YAEHYGHREK…SKVTNGVGKK (69 aa)) are lumenal. Phosphoserine is present on residues serine 417, serine 425, serine 442, and serine 454. A disordered region spans residues 430–473 (WYHGKGSKGSEDSPPKHSNNNESHSSRRRNRHSKSKVTNGVGKK). Residues 455-464 (SRRRNRHSKS) show a composition bias toward basic residues.

Belongs to the phosphatidyl serine synthase family.

It localises to the endoplasmic reticulum membrane. The enzyme catalyses a 1,2-diacyl-sn-glycero-3-phosphoethanolamine + L-serine = a 1,2-diacyl-sn-glycero-3-phospho-L-serine + ethanolamine. The catalysed reaction is a 1,2-diacyl-sn-glycero-3-phosphocholine + L-serine = a 1,2-diacyl-sn-glycero-3-phospho-L-serine + choline. It participates in phospholipid metabolism; phosphatidylserine biosynthesis. In terms of biological role, catalyzes a base-exchange reaction in which the polar head group of phosphatidylethanolamine (PE) or phosphatidylcholine (PC) is replaced by L-serine. Catalyzes mainly the conversion of phosphatidylcholine but also converts, in vitro and to a lesser extent, phosphatidylethanolamine. The polypeptide is Phosphatidylserine synthase 1 (Ptdss1) (Rattus norvegicus (Rat)).